Consider the following 211-residue polypeptide: Lipoprotein signal peptidase (211 aa).

3 helical membrane-spanning segments follow: residues 12–32 (LLALLFVTLVAIDQWTKYLAV), 96–116 (AFRNGFFTLVSLGAVAFILHY), and 127–147 (LQVALALVLSGAVGNFLDRLA). Catalysis depends on residues D153 and D174. Residues 167-187 (WPTFNIADSLIVVGVALLVLH) form a helical membrane-spanning segment.

Belongs to the peptidase A8 family.

Its subcellular location is the cell inner membrane. It catalyses the reaction Release of signal peptides from bacterial membrane prolipoproteins. Hydrolyzes -Xaa-Yaa-Zaa-|-(S,diacylglyceryl)Cys-, in which Xaa is hydrophobic (preferably Leu), and Yaa (Ala or Ser) and Zaa (Gly or Ala) have small, neutral side chains.. Its pathway is protein modification; lipoprotein biosynthesis (signal peptide cleavage). Its function is as follows. This protein specifically catalyzes the removal of signal peptides from prolipoproteins. The chain is Lipoprotein signal peptidase from Anaeromyxobacter sp. (strain Fw109-5).